Consider the following 637-residue polypeptide: Sec1 family domain-containing protein 1 (637 aa).

Ser-32, Ser-298, and Ser-523 each carry phosphoserine.

This sequence belongs to the STXBP/unc-18/SEC1 family. Interacts with STX17. Interacts with the COG complex via COG4. Interacts with STX5A. Highly expressed in testis. Detected at lower levels in brain, astrocytes, heart and small intestine.

It is found in the cytoplasm. The protein localises to the endoplasmic reticulum membrane. Its subcellular location is the golgi apparatus. The protein resides in the golgi stack membrane. Plays a role in SNARE-pin assembly and Golgi-to-ER retrograde transport via its interaction with COG4. Involved in vesicular transport between the endoplasmic reticulum and the Golgi. The sequence is that of Sec1 family domain-containing protein 1 (Scfd1) from Rattus norvegicus (Rat).